The chain runs to 460 residues: UDP-N-acetylmuramoylalanine--D-glutamate ligase (460 aa).

Residue 123-129 participates in ATP binding; it reads GTNGKTT.

It belongs to the MurCDEF family.

It is found in the cytoplasm. It catalyses the reaction UDP-N-acetyl-alpha-D-muramoyl-L-alanine + D-glutamate + ATP = UDP-N-acetyl-alpha-D-muramoyl-L-alanyl-D-glutamate + ADP + phosphate + H(+). It participates in cell wall biogenesis; peptidoglycan biosynthesis. Cell wall formation. Catalyzes the addition of glutamate to the nucleotide precursor UDP-N-acetylmuramoyl-L-alanine (UMA). The protein is UDP-N-acetylmuramoylalanine--D-glutamate ligase (murD) of Enterococcus hirae.